The following is a 90-amino-acid chain: MAHKKAGGSSRNGRDSQAKRLGTKVYGGELIPAGSIIIRQRGTRFHAGENVGMGKDHTLFAKVDGYVKFVVKGALKRKTVIVEQYTGEAA.

Positions 1–21 (MAHKKAGGSSRNGRDSQAKRL) are disordered.

This sequence belongs to the bacterial ribosomal protein bL27 family.

The chain is Large ribosomal subunit protein bL27 from Laribacter hongkongensis (strain HLHK9).